The following is a 91-amino-acid chain: Small ribosomal subunit protein uS19 (91 aa).

This sequence belongs to the universal ribosomal protein uS19 family.

In terms of biological role, protein S19 forms a complex with S13 that binds strongly to the 16S ribosomal RNA. The sequence is that of Small ribosomal subunit protein uS19 from Erythrobacter litoralis (strain HTCC2594).